Reading from the N-terminus, the 252-residue chain is MLMIISPSKTQNFDPRPGIDYTVPAQAARTQRLVKQLRQYSPEDLGKLMKISPKLSDLNWQRYQDFQDSFTQNNAKQALLAFKGDVYNGIEVDTYTPEDFTFAQNHLRILSGLYGLLKPLDLIQPYRLEMGTKLQTDKGKTLYDFWGAQITDALNADLASDTTLVNLASGEYFKAVQPQQLNGKVLNIAFKENKNGTYKVIGIHAKRARGLMVNYAIQNRITAPKALQAFDEEGYGFEPSLSTETEWVFCRN.

It belongs to the UPF0246 family.

This chain is UPF0246 protein AM1_4276, found in Acaryochloris marina (strain MBIC 11017).